The chain runs to 312 residues: Putative HTH-type transcriptional regulatory protein TV0294 (312 aa).

The 54-residue stretch at 133–186 (LRERRNELNLSIGNISSYLGVSRRSVSLYENGSAATIDIFIRLRNILKADIVDH) folds into the HTH cro/C1-type domain. Positions 144-163 (IGNISSYLGVSRRSVSLYEN) form a DNA-binding region, H-T-H motif.

The chain is Putative HTH-type transcriptional regulatory protein TV0294 from Thermoplasma volcanium (strain ATCC 51530 / DSM 4299 / JCM 9571 / NBRC 15438 / GSS1).